The sequence spans 385 residues: MSEILVLNCGSSSVKFALINPHTSQSLVTGLAENIATKNCKVVFKAEHKIEKYLENGSYKDVFEMLKDFLVENKHLEKIVAIGHRVVHGGQYFSKSVLINADSLEKIKACIALAPLHNPAHIEGIRFCQQIFPELPQVAVFDTAFHQTVPSYIAEYAIPYELTHKHNIRKYGAHGTSHKYVSEQAAKILTQQKANVIVAHLGNGCSITAVVDGKSIDTSMGLTPLDGLVMGTRSGCIDPSIFAYIISDNLGWSVTEITNMLNKQSGLLGICGHNDMREVSQLAAKGDSLAKLAIEIFSHRVAKFVASYMIYFNKLDALVFTGGIGENAANIRKNIISKLANLGFMIDHQKNSNSETFINSKNSHNIMVIATNEELMIAQETQNLI.

N8 contacts Mg(2+). Position 15 (K15) interacts with ATP. Position 85 (R85) interacts with substrate. The active-site Proton donor/acceptor is D142. ATP contacts are provided by residues 200 to 204, 275 to 277, and 323 to 327; these read HLGNG, DMR, and GIGEN. E373 lines the Mg(2+) pocket.

It belongs to the acetokinase family. In terms of assembly, homodimer. Mg(2+) serves as cofactor. Mn(2+) is required as a cofactor.

The protein resides in the cytoplasm. The catalysed reaction is acetate + ATP = acetyl phosphate + ADP. It functions in the pathway metabolic intermediate biosynthesis; acetyl-CoA biosynthesis; acetyl-CoA from acetate: step 1/2. Functionally, catalyzes the formation of acetyl phosphate from acetate and ATP. Can also catalyze the reverse reaction. This chain is Acetate kinase, found in Francisella tularensis subsp. holarctica (strain OSU18).